A 545-amino-acid chain; its full sequence is Afadin- and alpha-actinin-binding protein B (545 aa).

2 coiled-coil regions span residues 106-287 (RSKE…SQRK) and 358-442 (ARGD…AIRL). A disordered region spans residues 497–545 (HDRHLASSGDHYQRPRKTLPITPSSKHSLTQRESVAWRDSSISPNGTDF). Composition is skewed to polar residues over residues 517-529 (ITPS…TQRE) and 536-545 (SSISPNGTDF).

The protein belongs to the ADIP family. In terms of assembly, interacts with WRAP73.

The protein localises to the cell junction. It localises to the adherens junction. It is found in the cytoplasm. The protein resides in the cytoskeleton. Its subcellular location is the microtubule organizing center. The protein localises to the centrosome. It localises to the centriolar satellite. Belongs to an adhesion system, which plays a role in the organization of homotypic, interneuronal and heterotypic cell-cell adherens junctions (AJs). Involved in cell movement. Acts as a centrosome maturation factor, probably by maintaining the integrity of the pericentriolar material and proper microtubule nucleation at mitotic spindle poles. The function seems to implicate at least in part WRAP73; the SSX2IP:WRAP73 complex is proposed to act as regulator of spindle anchoring at the mitotic centrosome. This is Afadin- and alpha-actinin-binding protein B (ssx2ip-b) from Xenopus laevis (African clawed frog).